The following is a 421-amino-acid chain: Subtilisin-like protease 2 (421 aa).

The first 16 residues, 1–16, serve as a signal peptide directing secretion; it reads MQLLNFGLLLLPFVAG. A propeptide spanning residues 17-122 is cleaved from the precursor; that stretch reads DLAPQPEPLL…VHPDQHVYLA (106 aa). In terms of domain architecture, Inhibitor I9 spans 36–122; the sequence is QYIVTLKEGL…VHPDQHVYLA (87 aa). Residues 131-421 enclose the Peptidase S8 domain; that stretch reads RWGLGYMSSK…ERKFTLPKYY (291 aa). Catalysis depends on charge relay system residues D169 and H201. N-linked (GlcNAc...) asparagine glycosylation is found at N248, N261, and N348. Residue S357 is the Charge relay system of the active site. An N-linked (GlcNAc...) asparagine glycan is attached at N388.

This sequence belongs to the peptidase S8 family.

Its subcellular location is the secreted. Secreted subtilisin-like serine protease with keratinolytic activity that contributes to pathogenicity. This Arthroderma benhamiae (strain ATCC MYA-4681 / CBS 112371) (Trichophyton mentagrophytes) protein is Subtilisin-like protease 2 (SUB2).